Here is a 1217-residue protein sequence, read N- to C-terminus: Disease resistance protein RPS4 (1217 aa).

The TIR domain maps to 14-175 (PQHQVFINFR…EIVKAVKTAL (162 aa)). Residue 23–28 (RGADLR) coordinates NAD(+). Positions 33–34 (SH) are important for interaction with RRS1. The active site involves glutamate 88. Residues 211–472 (EQRLKDLEEK…FRSQDKDYVE (262 aa)) form the NB-ARC domain. 11 LRR repeats span residues 581–606 (MGNL…KINI), 614–636 (LKEV…DFNP), 637–659 (INLV…DKDT), 682–706 (AEKL…MKKM), 708–728 (MLAF…EMNL), 729–749 (ISLK…PLIS), 750–774 (DNIE…KLQR), 796–818 (LKAL…EIDI), 819–842 (SFLN…SVQY), 843–860 (LCLS…GISQ), and 861–887 (LSQL…NLQC). The segment at 1161 to 1195 (TTEGVDGRVNKKKKTRMDNGRPKKKQRSGRDDNQT) is disordered. Residues 1170–1177 (NKKKKTRM) carry the Nuclear localization signal motif.

The protein belongs to the disease resistance TIR-NB-LRR family. In terms of assembly, interacts with EDS1. Interacts with SRFR1. Interacts with RRS1.

The protein resides in the endomembrane system. It is found in the cytoplasm. The protein localises to the nucleus. The catalysed reaction is NAD(+) + H2O = ADP-D-ribose + nicotinamide + H(+). Functionally, disease resistance (R) protein that specifically recognizes the AvrRps4 type III effector avirulence protein from P.syringae. Resistance proteins guard the plant against pathogens that contain an appropriate avirulence protein via an indirect interaction with this avirulence protein. That triggers a defense system including the hypersensitive response, which restricts the pathogen growth. Probably acts as a NAD(+) hydrolase (NADase): in response to activation, catalyzes cleavage of NAD(+) into ADP-D-ribose (ADPR) and nicotinamide; NAD(+) cleavage triggering a defense system that promotes cell death. The combined presence of both regular and alternative RPS4 transcripts with truncated open reading frames (ORFs) is necessary for function. RPS4 function is regulated at multiple levels, including gene expression, alternative splicing, and protein stability. When over-expressed, confers temperature-conditioned EDS1-dependent auto-immunity. Heterodimerization with RRS1 is required to form a functional complex to recognize AvrRps4 and PopP2. Abscisic acid deficiency enhances nuclear accumulation of RPS4 and its cell death-inducing activity. The sequence is that of Disease resistance protein RPS4 from Arabidopsis thaliana (Mouse-ear cress).